We begin with the raw amino-acid sequence, 226 residues long: Thiamine-phosphate synthase (226 aa).

4-amino-2-methyl-5-(diphosphooxymethyl)pyrimidine contacts are provided by residues 46–50 (QFRDK) and D83. Mg(2+) is bound by residues D84 and D103. Residue S122 participates in 4-amino-2-methyl-5-(diphosphooxymethyl)pyrimidine binding. Residue 149-151 (TQS) coordinates 2-[(2R,5Z)-2-carboxy-4-methylthiazol-5(2H)-ylidene]ethyl phosphate. K152 is a 4-amino-2-methyl-5-(diphosphooxymethyl)pyrimidine binding site. 2-[(2R,5Z)-2-carboxy-4-methylthiazol-5(2H)-ylidene]ethyl phosphate contacts are provided by residues G181 and 201–202 (IT).

Belongs to the thiamine-phosphate synthase family. The cofactor is Mg(2+).

The enzyme catalyses 2-[(2R,5Z)-2-carboxy-4-methylthiazol-5(2H)-ylidene]ethyl phosphate + 4-amino-2-methyl-5-(diphosphooxymethyl)pyrimidine + 2 H(+) = thiamine phosphate + CO2 + diphosphate. It catalyses the reaction 2-(2-carboxy-4-methylthiazol-5-yl)ethyl phosphate + 4-amino-2-methyl-5-(diphosphooxymethyl)pyrimidine + 2 H(+) = thiamine phosphate + CO2 + diphosphate. It carries out the reaction 4-methyl-5-(2-phosphooxyethyl)-thiazole + 4-amino-2-methyl-5-(diphosphooxymethyl)pyrimidine + H(+) = thiamine phosphate + diphosphate. It functions in the pathway cofactor biosynthesis; thiamine diphosphate biosynthesis; thiamine phosphate from 4-amino-2-methyl-5-diphosphomethylpyrimidine and 4-methyl-5-(2-phosphoethyl)-thiazole: step 1/1. Its function is as follows. Condenses 4-methyl-5-(beta-hydroxyethyl)thiazole monophosphate (THZ-P) and 2-methyl-4-amino-5-hydroxymethyl pyrimidine pyrophosphate (HMP-PP) to form thiamine monophosphate (TMP). This chain is Thiamine-phosphate synthase, found in Haemophilus influenzae (strain ATCC 51907 / DSM 11121 / KW20 / Rd).